The following is a 255-amino-acid chain: DNA repair protein RecO (255 aa).

It belongs to the RecO family.

Functionally, involved in DNA repair and RecF pathway recombination. The polypeptide is DNA repair protein RecO (Bacillus velezensis (strain DSM 23117 / BGSC 10A6 / LMG 26770 / FZB42) (Bacillus amyloliquefaciens subsp. plantarum)).